A 249-amino-acid chain; its full sequence is Uridylate kinase (249 aa).

Residue 22-25 (KISG) coordinates ATP. The tract at residues 30-35 (GTQGFG) is involved in allosteric activation by GTP. Residue Gly-64 participates in UMP binding. Positions 65 and 69 each coordinate ATP. UMP-binding positions include Asp-84 and 145-152 (TGNPYFTT). Residues Asn-173, Tyr-179, and Asp-182 each contribute to the ATP site.

Belongs to the UMP kinase family. As to quaternary structure, homohexamer.

It is found in the cytoplasm. The catalysed reaction is UMP + ATP = UDP + ADP. The protein operates within pyrimidine metabolism; CTP biosynthesis via de novo pathway; UDP from UMP (UMPK route): step 1/1. Allosterically activated by GTP. Inhibited by UTP. Its function is as follows. Catalyzes the reversible phosphorylation of UMP to UDP. This chain is Uridylate kinase, found in Ruegeria sp. (strain TM1040) (Silicibacter sp.).